The sequence spans 209 residues: Probable glutathione peroxidase 8-A (209 aa).

A helical membrane pass occupies residues 18-40; that stretch reads VSVVFLSMLLCTGILCVLQLGFL. Residue Cys-79 is part of the active site.

This sequence belongs to the glutathione peroxidase family.

It localises to the membrane. The catalysed reaction is 2 glutathione + H2O2 = glutathione disulfide + 2 H2O. In Xenopus laevis (African clawed frog), this protein is Probable glutathione peroxidase 8-A (gpx8-a).